The chain runs to 317 residues: Beta-ketoacyl-[acyl-carrier-protein] synthase III (317 aa).

Active-site residues include C112 and H244. The ACP-binding stretch occupies residues 245–249 (QANLR). The active site involves N274.

It belongs to the thiolase-like superfamily. FabH family. In terms of assembly, homodimer.

Its subcellular location is the cytoplasm. The catalysed reaction is malonyl-[ACP] + acetyl-CoA + H(+) = 3-oxobutanoyl-[ACP] + CO2 + CoA. The protein operates within lipid metabolism; fatty acid biosynthesis. Catalyzes the condensation reaction of fatty acid synthesis by the addition to an acyl acceptor of two carbons from malonyl-ACP. Catalyzes the first condensation reaction which initiates fatty acid synthesis and may therefore play a role in governing the total rate of fatty acid production. Possesses both acetoacetyl-ACP synthase and acetyl transacylase activities. Its substrate specificity determines the biosynthesis of branched-chain and/or straight-chain of fatty acids. This chain is Beta-ketoacyl-[acyl-carrier-protein] synthase III, found in Shigella boydii serotype 4 (strain Sb227).